Consider the following 284-residue polypeptide: Tropomyosin (284 aa).

A disordered region spans residues 1–38; sequence MEAIKKKMQAMKLEKDNAVDRAETAEQQSREAALRAEK. Residues 1–284 adopt a coiled-coil conformation; the sequence is MEAIKKKMQA…DQTFSELTGY (284 aa). Residues 12–38 are compositionally biased toward basic and acidic residues; that stretch reads KLEKDNAVDRAETAEQQSREAALRAEK.

It belongs to the tropomyosin family. As to quaternary structure, homodimer.

Functionally, tropomyosin, in association with the troponin complex, plays a central role in the calcium dependent regulation of muscle contraction. The sequence is that of Tropomyosin from Rhipicephalus microplus (Cattle tick).